We begin with the raw amino-acid sequence, 20 residues long: DINGGGATLPQALYQTSGVL.

Expressed by the venom gland.

The protein resides in the secreted. The catalysed reaction is a phosphate monoester + H2O = an alcohol + phosphate. Has hemorrhagic activity. The polypeptide is Alkaline phosphatase (Deinagkistrodon acutus (Hundred-pace snake)).